The chain runs to 197 residues: Peptide deformylase (197 aa).

2 residues coordinate Fe cation: Cys-106 and His-148. Glu-149 is an active-site residue. Position 152 (His-152) interacts with Fe cation.

It belongs to the polypeptide deformylase family. It depends on Fe(2+) as a cofactor.

The catalysed reaction is N-terminal N-formyl-L-methionyl-[peptide] + H2O = N-terminal L-methionyl-[peptide] + formate. Removes the formyl group from the N-terminal Met of newly synthesized proteins. Requires at least a dipeptide for an efficient rate of reaction. N-terminal L-methionine is a prerequisite for activity but the enzyme has broad specificity at other positions. The chain is Peptide deformylase from Mycobacterium tuberculosis (strain ATCC 25177 / H37Ra).